The primary structure comprises 270 residues: Putative phosphoenolpyruvate synthase regulatory protein (270 aa).

Residue 150–157 (GVSRCGKT) participates in ADP binding.

The protein belongs to the pyruvate, phosphate/water dikinase regulatory protein family. PSRP subfamily.

The catalysed reaction is [pyruvate, water dikinase] + ADP = [pyruvate, water dikinase]-phosphate + AMP + H(+). It catalyses the reaction [pyruvate, water dikinase]-phosphate + phosphate + H(+) = [pyruvate, water dikinase] + diphosphate. Its function is as follows. Bifunctional serine/threonine kinase and phosphorylase involved in the regulation of the phosphoenolpyruvate synthase (PEPS) by catalyzing its phosphorylation/dephosphorylation. This is Putative phosphoenolpyruvate synthase regulatory protein from Shewanella sediminis (strain HAW-EB3).